The following is a 359-amino-acid chain: Protein URE2 (359 aa).

The segment at 39 to 82 (FSAGVNNNNNNSSSSNNNNNNNNNAQNNNSGRNGSQSNDNGNNI) is disordered. Positions 44–81 (NNNNNNSSSSNNNNNNNNNAQNNNSGRNGSQSNDNGNN) are enriched in low complexity. The GST N-terminal domain maps to 117 to 201 (EGYTLFSHRS…HLVNKYYKET (85 aa)). The GST C-terminal domain occupies 210–359 (DLADQSQINA…PAVIKALRGE (150 aa)).

This sequence belongs to the GST superfamily. Homodimer.

Its function is as follows. Plays an important role in the cellular response to the nitrogen source. URE2 gene plays a major part in the repression of GLN1 and GDH2 genes by glutamine, and is required for the inactivation of glutamine synthetase. URE2 gene product may catalytically inactivate GLN3 in response to an increase in the intracellular concentration of glutamine. This is Protein URE2 (URE2) from Saccharomyces paradoxus (Yeast).